The sequence spans 570 residues: Serine/threonine-protein kinase STY17 (570 aa).

Residues 112-145 (LNGNSGDVDPSDPAVNEDAQSSYNSRSLAPPTFG) form a disordered region. Positions 129 to 145 (DAQSSYNSRSLAPPTFG) are enriched in polar residues. Positions 180–260 (EITFSTIDRP…PCSKQKSITF (81 aa)) constitute an ACT domain. The region spanning 292–545 (LKIEKKVACG…EIIEMLNQLI (254 aa)) is the Protein kinase domain. Residues 298–306 (VACGSYGEL) and lysine 319 each bind ATP. Aspartate 413 (proton acceptor) is an active-site residue. Position 441 is a phosphoserine (serine 441). At threonine 445 the chain carries Phosphothreonine.

The protein belongs to the protein kinase superfamily. Ser/Thr protein kinase family. Post-translationally, autophosphorylated on serine and threonine residues. Autophosphorylated at Thr-445.

Its subcellular location is the cytoplasm. The protein resides in the cytosol. It catalyses the reaction L-seryl-[protein] + ATP = O-phospho-L-seryl-[protein] + ADP + H(+). It carries out the reaction L-threonyl-[protein] + ATP = O-phospho-L-threonyl-[protein] + ADP + H(+). Its activity is regulated as follows. Activated by autophosphorylation at Thr-445. Its function is as follows. Serine/threonine protein kinase that specifically phosphorylates chloroplast precursor proteins in the cytosol within the cleavable presequences (transit peptides). May be part of a cytosolic regulatory network involved in chloroplast protein import. Does not phosphorylate mitochondrion precursor proteins. Specific for ATP and does not utilize other NTPs. Plays a role in chloroplast biogenesis and differentiation in cotyledons, possibly through phosphorylation of chloroplast preproteins. The polypeptide is Serine/threonine-protein kinase STY17 (Arabidopsis thaliana (Mouse-ear cress)).